The primary structure comprises 90 residues: RNA-binding protein Hfq (90 aa).

The Sm domain maps to 9 to 68 (DPFLNALRRERVPVSIYLVNGIKLQGQVESFDQFVILLKNTVSQMVYKHAISTVVPARPF).

It belongs to the Hfq family. As to quaternary structure, homohexamer.

Functionally, RNA chaperone that binds small regulatory RNA (sRNAs) and mRNAs to facilitate mRNA translational regulation in response to envelope stress, environmental stress and changes in metabolite concentrations. Also binds with high specificity to tRNAs. The protein is RNA-binding protein Hfq of Shewanella baltica (strain OS155 / ATCC BAA-1091).